Consider the following 45-residue polypeptide: Peroxidase 3 (45 aa).

The protein belongs to the peroxidase family. Classical plant (class III) peroxidase subfamily. Heme b is required as a cofactor. It depends on Ca(2+) as a cofactor.

It is found in the secreted. The catalysed reaction is 2 a phenolic donor + H2O2 = 2 a phenolic radical donor + 2 H2O. Functionally, removal of H(2)O(2), oxidation of toxic reductants, biosynthesis and degradation of lignin, suberization, auxin catabolism, response to environmental stresses such as wounding, pathogen attack and oxidative stress. These functions might be dependent on each isozyme/isoform in each plant tissue. The protein is Peroxidase 3 of Capsicum annuum (Capsicum pepper).